A 93-amino-acid chain; its full sequence is Acylphosphatase (93 aa).

In terms of domain architecture, Acylphosphatase-like spans 6 to 92 (RAHVWVGGKV…EGLTHFEVLR (87 aa)). Catalysis depends on residues arginine 21 and asparagine 39.

This sequence belongs to the acylphosphatase family.

The enzyme catalyses an acyl phosphate + H2O = a carboxylate + phosphate + H(+). The chain is Acylphosphatase (acyP) from Gloeobacter violaceus (strain ATCC 29082 / PCC 7421).